We begin with the raw amino-acid sequence, 152 residues long: Ribonuclease pancreatic beta-type (152 aa).

Residues 1–25 (MGLEKSFILFSLLVLVLGWVQPSLG) form the signal peptide. A compositionally biased stretch (basic and acidic residues) spans 31-45 (SSADKFKRQHMDPES). Residues 31–53 (SSADKFKRQHMDPESPSKSSPTY) are disordered. K35 and R38 together coordinate substrate. H40 (proton acceptor) is an active-site residue. Cystine bridges form between C54–C112, C68–C123, C86–C138, and C93–C100. Residues 69–73 (KPVNT), K94, and R113 each bind substrate. H147 acts as the Proton donor in catalysis.

The protein belongs to the pancreatic ribonuclease family. In terms of assembly, monomer.

It is found in the secreted. It carries out the reaction an [RNA] containing cytidine + H2O = an [RNA]-3'-cytidine-3'-phosphate + a 5'-hydroxy-ribonucleotide-3'-[RNA].. The enzyme catalyses an [RNA] containing uridine + H2O = an [RNA]-3'-uridine-3'-phosphate + a 5'-hydroxy-ribonucleotide-3'-[RNA].. Endonuclease that catalyzes the cleavage of RNA on the 3' side of pyrimidine nucleotides. Acts on single-stranded and double-stranded RNA. This chain is Ribonuclease pancreatic beta-type, found in Rattus exulans (Polynesian rat).